The following is a 266-amino-acid chain: Very-long-chain aldehyde decarbonylase GL1-11 (266 aa).

The next 4 helical transmembrane spans lie at 25–45, 74–94, 106–126, and 163–183; these read VVTFLLHETVFFLSGLPSLLF, ILYHVCVNLPVMVLSYPAFKF, WTVIVSQVLFYFVLEDFIFYW, and ILFLGFATIVGPALTGPHLFT. The region spanning 113-248 is the Fatty acid hydroxylase domain; that stretch reads VLFYFVLEDF…FVYMDWLFGT (136 aa).

This sequence belongs to the sterol desaturase family. As to quaternary structure, homodimer.

The protein localises to the endoplasmic reticulum membrane. It catalyses the reaction a long-chain fatty aldehyde + 2 NADPH + O2 + H(+) = a long-chain alkane + formate + 2 NADP(+) + H2O. Functionally, aldehyde decarbonylase involved in the conversion of aldehydes to alkanes. Core component of a very-long-chain alkane synthesis complex. The sequence is that of Very-long-chain aldehyde decarbonylase GL1-11 from Oryza sativa subsp. indica (Rice).